The primary structure comprises 302 residues: Sulfate adenylyltransferase subunit 2 (302 aa).

It belongs to the PAPS reductase family. CysD subfamily. In terms of assembly, heterodimer composed of CysD, the smaller subunit, and CysN.

The catalysed reaction is sulfate + ATP + H(+) = adenosine 5'-phosphosulfate + diphosphate. It participates in sulfur metabolism; hydrogen sulfide biosynthesis; sulfite from sulfate: step 1/3. Functionally, with CysN forms the ATP sulfurylase (ATPS) that catalyzes the adenylation of sulfate producing adenosine 5'-phosphosulfate (APS) and diphosphate, the first enzymatic step in sulfur assimilation pathway. APS synthesis involves the formation of a high-energy phosphoric-sulfuric acid anhydride bond driven by GTP hydrolysis by CysN coupled to ATP hydrolysis by CysD. The protein is Sulfate adenylyltransferase subunit 2 of Methylococcus capsulatus (strain ATCC 33009 / NCIMB 11132 / Bath).